Consider the following 354-residue polypeptide: Rhodopsin (354 aa).

The Extracellular portion of the chain corresponds to 1–36; the sequence is MNGTEGPYFYIPMVNTTGIVRSPYEYPQYYLVNPAA. 2 N-linked (GlcNAc...) asparagine glycosylation sites follow: Asn-2 and Asn-15. A helical membrane pass occupies residues 37-61; it reads YAALGAYMFFLILLGFPINFLTLYV. The Cytoplasmic portion of the chain corresponds to 62–73; that stretch reads TLEHKKLRTPLN. A helical transmembrane segment spans residues 74–96; it reads YILLNLAVADLFMVFGGFTTTMY. The Extracellular portion of the chain corresponds to 97-110; it reads TSMHGYFVLGRLGC. Cys-110 and Cys-187 are disulfide-bonded. A helical transmembrane segment spans residues 111–133; the sequence is NLEGFFATLGGEIGLWSLVVLAI. The short motif at 134–136 is the 'Ionic lock' involved in activated form stabilization element; it reads ERW. Residues 134 to 152 are Cytoplasmic-facing; sequence ERWVVVCKPISNFRFGENH. The chain crosses the membrane as a helical span at residues 153–173; it reads AIMGLAFTWIMACACAVPPLV. The Extracellular portion of the chain corresponds to 174-202; that stretch reads GWSRYIPEGMQCSCGVDYYTRAEGFNNES. Asn-200 is a glycosylation site (N-linked (GlcNAc...) asparagine). The helical transmembrane segment at 203 to 224 threads the bilayer; sequence FVVYMFTCHFCIPLTIIGFCYG. At 225–252 the chain is on the cytoplasmic side; it reads RLLCAVKEAAAAQQESETTQRAEREVTR. A helical transmembrane segment spans residues 253 to 274; that stretch reads MVILMVVGFLVCWLPYASVAWY. Over 275-286 the chain is Extracellular; that stretch reads IFSNQGSQFGPL. A helical transmembrane segment spans residues 287 to 308; it reads FMTIPAFFAKSSSVYNPMIYIC. Lys-296 is subject to N6-(retinylidene)lysine. Topologically, residues 309–354 are cytoplasmic; sequence MNKQFRHCMITTLCCGKNPFEEEEGASTTASKTEASSVSSSSVSPA. Residues Cys-322 and Cys-323 are each lipidated (S-palmitoyl cysteine). The tract at residues 333 to 354 is disordered; that stretch reads GASTTASKTEASSVSSSSVSPA. A compositionally biased stretch (low complexity) spans 334 to 354; sequence ASTTASKTEASSVSSSSVSPA.

The protein belongs to the G-protein coupled receptor 1 family. Opsin subfamily. Post-translationally, phosphorylated on some or all of the serine and threonine residues present in the C-terminal region. In terms of processing, contains one covalently linked retinal chromophore.

The protein resides in the membrane. It is found in the cell projection. The protein localises to the cilium. It localises to the photoreceptor outer segment. In terms of biological role, photoreceptor required for image-forming vision at low light intensity. While most salt water fish species use retinal as chromophore, most freshwater fish use 3-dehydroretinal, or a mixture of retinal and 3-dehydroretinal. Light-induced isomerization of 11-cis to all-trans retinal triggers a conformational change that activates signaling via G-proteins. Subsequent receptor phosphorylation mediates displacement of the bound G-protein alpha subunit by arrestin and terminates signaling. The sequence is that of Rhodopsin (rho) from Salaria pavo (Peacock blenny).